Consider the following 396-residue polypeptide: MTNIRITEVFTQAMPVLEKLEEAGFEAYFVGGCVRDLLLERPIHDVDIATSAYPEEVKETFAKSIDTGILHGTVTVLYGGSSYEITTFRTESGYQDFRRPDKVTFVQNLDEDLKRRDFTINALAMNRQGEIIDLFDGLGDLKRRVIKAVGVAEDRFHEDALRMMRAVRFMSQLSFSLEEKTRQAIINNHELLSKISVERIREEFVKLALGKDSRQAFKDFLATGLSEECPGLAGKKDQLSVLTDLKAGPDDEAVFWSLIAVLINLPADKISPFMRAWKNSNAMNQQVRQIVAAFDLLSRGEESDFDLFEIGQENLEAALKLAGLLGKPLSSQVLLDRYNRLPIKAAGELAIDGQWLIKEGIKPSPELGQLLRKALEGVVSGQVENSQAAIAEFLAI.

Residues Gly32 and Arg35 each contribute to the ATP site. CTP-binding residues include Gly32 and Arg35. Residues Asp45 and Asp47 each coordinate Mg(2+). ATP-binding residues include Arg116, Asp159, Arg162, Arg165, and Arg168. Arg116, Asp159, Arg162, Arg165, and Arg168 together coordinate CTP.

The protein belongs to the tRNA nucleotidyltransferase/poly(A) polymerase family. Bacterial CCA-adding enzyme type 3 subfamily. Homodimer. Requires Mg(2+) as cofactor.

The catalysed reaction is a tRNA precursor + 2 CTP + ATP = a tRNA with a 3' CCA end + 3 diphosphate. It catalyses the reaction a tRNA with a 3' CCA end + 2 CTP + ATP = a tRNA with a 3' CCACCA end + 3 diphosphate. In terms of biological role, catalyzes the addition and repair of the essential 3'-terminal CCA sequence in tRNAs without using a nucleic acid template. Adds these three nucleotides in the order of C, C, and A to the tRNA nucleotide-73, using CTP and ATP as substrates and producing inorganic pyrophosphate. tRNA 3'-terminal CCA addition is required both for tRNA processing and repair. Also involved in tRNA surveillance by mediating tandem CCA addition to generate a CCACCA at the 3' terminus of unstable tRNAs. While stable tRNAs receive only 3'-terminal CCA, unstable tRNAs are marked with CCACCA and rapidly degraded. The chain is CCA-adding enzyme from Lactobacillus delbrueckii subsp. bulgaricus (strain ATCC BAA-365 / Lb-18).